Consider the following 291-residue polypeptide: ATP phosphoribosyltransferase (291 aa).

The protein belongs to the ATP phosphoribosyltransferase family. Long subfamily. The cofactor is Mg(2+).

The protein localises to the cytoplasm. The enzyme catalyses 1-(5-phospho-beta-D-ribosyl)-ATP + diphosphate = 5-phospho-alpha-D-ribose 1-diphosphate + ATP. It functions in the pathway amino-acid biosynthesis; L-histidine biosynthesis; L-histidine from 5-phospho-alpha-D-ribose 1-diphosphate: step 1/9. Feedback inhibited by histidine. Functionally, catalyzes the condensation of ATP and 5-phosphoribose 1-diphosphate to form N'-(5'-phosphoribosyl)-ATP (PR-ATP). Has a crucial role in the pathway because the rate of histidine biosynthesis seems to be controlled primarily by regulation of HisG enzymatic activity. The sequence is that of ATP phosphoribosyltransferase from Desulfosudis oleivorans (strain DSM 6200 / JCM 39069 / Hxd3) (Desulfococcus oleovorans).